Reading from the N-terminus, the 117-residue chain is Large ribosomal subunit protein bL19 (117 aa).

Belongs to the bacterial ribosomal protein bL19 family.

Its function is as follows. This protein is located at the 30S-50S ribosomal subunit interface and may play a role in the structure and function of the aminoacyl-tRNA binding site. This chain is Large ribosomal subunit protein bL19, found in Cutibacterium acnes (strain DSM 16379 / KPA171202) (Propionibacterium acnes).